The chain runs to 122 residues: Acidic phospholipase A2 (122 aa).

7 cysteine pairs are disulfide-bonded: Cys-26–Cys-115, Cys-28–Cys-44, Cys-43–Cys-95, Cys-49–Cys-122, Cys-50–Cys-88, Cys-57–Cys-81, and Cys-75–Cys-86. Residues Tyr-27, Gly-29, and Gly-31 each contribute to the Ca(2+) site. Residue His-47 is part of the active site. Residue Asp-48 participates in Ca(2+) binding. Residue Asp-89 is part of the active site.

May form tetramers. Ca(2+) is required as a cofactor. As to expression, expressed by the venom gland.

Its subcellular location is the secreted. It carries out the reaction a 1,2-diacyl-sn-glycero-3-phosphocholine + H2O = a 1-acyl-sn-glycero-3-phosphocholine + a fatty acid + H(+). PLA2 catalyzes the calcium-dependent hydrolysis of the 2-acyl groups in 3-sn-phosphoglycerides. In vivo, is non-lethal to mice when intravenously injected up to a concentration of 30 ug, however does show significant edematogenic activity at the injection site. The chain is Acidic phospholipase A2 from Lachesis acrochorda (Chocoan bushmaster).